A 1366-amino-acid chain; its full sequence is MNQYHIYEAIGHGKCSTVYKGRKKKTIEYFACKSVDKSRKNKVLQEVRILHSLNHPNVLKFYAWYETSAHMWLVLEYCVGGDLRTLLQQDCKLPEESIYGLAYDLVIALQYLHSKGIIYCDLKPSNILLDENGHIKLCDFGLSRKLDDISKSPSTGKRGTPYYMAPELYEDGGIHSFASDLWALGCVLYECYTGRPPFVAREFTQLVKSIHSDPTPPLPGNASRSFVNLIESLLIKDPAQRIQWADLCGHAFWKSKINLVQLPTQPAFDDMIGINTKPCLSERNGDRPNKTPPKYREKDRKGGSKQNENSIQGSKGHETPIKGTPGGSKAQAKLPSRATEEKHGGRPAANRQVNILRLSRIAKANLQKENEKENYRRPLPNSNENCAEVKIDNTDMELDFDENNDDEGPDESEGTENTSCAQEERVMSHNENHRRQRVVSSNVPDENSSANETPTLGEARDCHEDQSEPMDMSAAPPSASPQLKTHRGRETSGVAVNHDSSKAPTSLTDVFWHISDLSVRPVMPSRKSDKEAVHSLSFETPQPSDFSKKGKQELEPLNNRIITVLSGSSSGLSEKQNLIRYLETLSTNADAANILTNGPIMLVLVKVLRLSKTPAFRVQIASLIGLLIRHSTSIEDDLANSGILDSLTNGLRDKHEKVRRFSMAALGELLFYISTQNEHKDFKPPESPSKETRSASGWQVSNALISLVSSVLRKGEDDLTQVYALRTIENICSQGAYWATRFSSQDLISNLCYIYKATGKQESMRQTAGSCLVRLARFNPPCIQTVVEKLSLKEIASSFVKGSAREQQVCLNLLNMAMIGSHTFTSFGRHLVTLTEEKNLFPSLLSIIEQGTEVLRGKALLFVAFLCKNSRRWLTNFFCNARFLPVVDRLAKEKDSYLQQCLEAFVNVIASIIPGMLDTITNDIQQLMTGRRHGPVSPLNSRAPVKTNAHLFPVVLHLLGSSSFKNKMVTPQVLRQLANLTKLVEASFQGRDDFRVTLLQVLECITGDAPLVTQNGEIIIREILPSLAAIYNGNKDGDARFLCLKIWFDSLTILLTECTEIEQQISEDLKSISNSHFLPLYPALIQDEDPIPAYAQKLLVMLVEFDYIKISNLLRHNTVSQCFEFLLGDLSSANVNNVKLCLALASAPEMESKLLSQLKVVRRIGNLLEFVNAKDMEDFLEPTLSLCRAFLLRSLGNKKGLSSNYTKEPTLLSEASFTFEVDPQECIRDIADFGSNIGLFLHFAGLDDDTSIAVADIASECVVLLLKAASREATTGFLTNLPKITPILDSWRRRKSTELHLLVLKRVLHCLGYACKQYLSQAMILSISGHDVSKINAIVSEMKNSDAAGLNSIASLVAMELQRLPR.

ATP contacts are provided by residues 10–18 and Lys33; that span reads IGHGKCSTV. The active-site Proton acceptor is the Asp121. Disordered stretches follow at residues 276–356, 367–386, 398–502, and 524–549; these read TKPC…VNIL, QKENEKENYRRPLPNSNENC, LDFD…DSSK, and PSRKSDKEAVHSLSFETPQPSDFSKK. Residues 283–302 show a composition bias toward basic and acidic residues; the sequence is RNGDRPNKTPPKYREKDRKG. Residues 304–313 show a composition bias toward polar residues; the sequence is SKQNENSIQG. The span at 367-376 shows a compositional bias: basic and acidic residues; sequence QKENEKENYR. Residues 398–414 are compositionally biased toward acidic residues; the sequence is LDFDENNDDEGPDESEG. The segment covering 422–433 has biased composition (basic and acidic residues); sequence QEERVMSHNENH. Residues 438-454 show a composition bias toward polar residues; that stretch reads VVSSNVPDENSSANETP. HEAT repeat units lie at residues 595–633, 638–675, 699–737, 835–872, 878–907, 908–945, 946–986, 992–1018, 1019–1057, 1072–1111, 1279–1316, and 1329–1366; these read LTNGPIMLVLVKVLRLSKTPAFRVQIASLIGLLIRHSTS, LANSGILDSLTNGLRDKHEKVRRFSMAALGELLFYIST, QVSNALISLVSSVLRKGEDDLTQVYALRTIENICSQGAY, TEEKNLFPSLLSIIEQGTEVLRGKALLFVAFLCKNSRR, FCNARFLPVVDRLAKEKDSYLQQCLEAFVN, VIASIIPGMLDTITNDIQQLMTGRRHGPVSPLNSRAPV, KTNA…LVEA, DDFRVTLLQVLECITGDAPLVTQNGEI, IIREILPSLAAIYNGNKDGDARFLCLKIWFDSLTILLTE, ISNSHFLPLYPALIQDEDPIPAYAQKLLVMLVEFDYIKIS, TNLPKITPILDSWRRRKSTELHLLVLKRVLHCLGYACK, and GHDVSKINAIVSEMKNSDAAGLNSIASLVAMELQRLPR.

It belongs to the protein kinase superfamily. Ser/Thr protein kinase family. In terms of assembly, binds to microtubules (MT). Expressed in proliferating tissues of seedlings, lateral roots, young rosette leaves, siliques, flowers, embryos and stems (including apical meristem).

The protein resides in the cytoplasm. The protein localises to the cytoskeleton. It is found in the phragmoplast. It localises to the spindle. It catalyses the reaction L-seryl-[protein] + ATP = O-phospho-L-seryl-[protein] + ADP + H(+). The enzyme catalyses L-threonyl-[protein] + ATP = O-phospho-L-threonyl-[protein] + ADP + H(+). In terms of biological role, essential protein that regulates phragmoplast microtubule organization during cell plate expansion in cytokinesis during cell division, both somatic and syncytial. Required for endosperm cellularisation. In pollen development, involved in cellularisation during microsporogenesis by regulating radial microtubules (MT) organization in microspore mother cells. Seems to not have kinase activity. This Arabidopsis thaliana (Mouse-ear cress) protein is Serine/threonine-protein kinase RUNKEL.